We begin with the raw amino-acid sequence, 226 residues long: Small ribosomal subunit protein uS3 (226 aa).

The KH type-2 domain maps to 39–107 (VRNFIRKKLA…PVHINIEEIR (69 aa)).

This sequence belongs to the universal ribosomal protein uS3 family. As to quaternary structure, part of the 30S ribosomal subunit. Forms a tight complex with proteins S10 and S14.

Functionally, binds the lower part of the 30S subunit head. Binds mRNA in the 70S ribosome, positioning it for translation. The protein is Small ribosomal subunit protein uS3 of Alkalilimnicola ehrlichii (strain ATCC BAA-1101 / DSM 17681 / MLHE-1).